The sequence spans 776 residues: Bifunctional lysine-specific demethylase and histidyl-hydroxylase NO66 (776 aa).

Disordered regions lie at residues 1 to 57 (MGKK…EPKF), 87 to 126 (EQNG…AHKH), and 165 to 288 (ILDE…DDEG). Composition is skewed to basic and acidic residues over residues 47–57 (HYKEPSKEPKF) and 98–119 (EISP…DGVA). The segment covering 166–204 (LDEEVEDEEIDEEEFEDEEEVEDEEGMDEDETEIDESEM) has biased composition (acidic residues). Positions 206 to 216 (VDPKDIERCIE) are enriched in basic and acidic residues. Over residues 217-288 (FEDVDDEDEM…EMDADSDDEG (72 aa)) the composition is skewed to acidic residues. Positions 425 to 569 (QLVNPQTFDD…NLMEKVIPEA (145 aa)) constitute a JmjC domain. The Fe cation site is built by His-468, Asp-470, and His-535.

This sequence belongs to the ROX family. NO66 subfamily. The cofactor is Fe(2+).

It is found in the nucleus. It catalyses the reaction N(6),N(6)-dimethyl-L-lysyl(36)-[histone H3] + 2 2-oxoglutarate + 2 O2 = L-lysyl(36)-[histone H3] + 2 formaldehyde + 2 succinate + 2 CO2. Oxygenase that can act as both a histone lysine demethylase and a ribosomal histidine hydroxylase. Specifically demethylates 'Lys-4' (H3K4me) and 'Lys-36' (H3K36me) of histone H3, thereby playing a central role in histone code. The chain is Bifunctional lysine-specific demethylase and histidyl-hydroxylase NO66 (jmjc-1) from Caenorhabditis briggsae.